The primary structure comprises 370 residues: Calcium-binding protein 1 (370 aa).

The disordered stretch occupies residues 1-198 (MGGGDGAAFK…GRGDSVPAAA (198 aa)). Glycine 2 carries N-myristoyl glycine lipidation. Glycine 4 carries S-palmitoyl cysteine lipidation. 3 stretches are compositionally biased toward low complexity: residues 50–61 (HASAGPAAMSSH), 68–84 (KTSLLKAAAAAASGGSR), and 148–157 (ALPAAASRPS). 4 EF-hand domains span residues 225-260 (EEIEELREAFREFDKDKDGYINCRDLGNCMRTMGYM), 279-296 (GHVDFDDFVELMGPKLLA), 302-337 (IGVKELRDAFREFDTNGDGEISTSELREAMRKLLGH), and 339-370 (VGHRDIEEIIRDVDLNGDGRVDFEEFVRMMSR). Ca(2+) contacts are provided by aspartate 238, aspartate 240, aspartate 242, tyrosine 244, and aspartate 249. Mg(2+) is bound by residues aspartate 238, aspartate 240, aspartate 242, and tyrosine 244. The Ca(2+) site is built by aspartate 315, asparagine 317, aspartate 319, and glutamate 321. Serine 323 carries the post-translational modification Phosphoserine. Positions 326, 352, 353, 354, 356, 357, 358, 360, and 363 each coordinate Ca(2+).

As to quaternary structure, homodimer; when bound to calcium or magnesium. Interacts (via C-terminus) with ITPR1, ITPR2 and ITPR3. This binding is calcium dependent and the interaction correlates with calcium concentration. An additional calcium-independent interaction with the N-terminus of ITPR1 results in a decreased InsP(3) binding to the receptor. Interacts with CACNA1A (via C-terminal CDB motif) in the pre- and postsynaptic membranes. Interacts with CACNA1C (via C-terminal C and IQ motifs). The binding to the C motif is calcium independent whereas the binding to IQ requires the presence of calcium and is mutually exclusive with calmodulin binding. Interacts with CACNA1D. Interacts with TRPC5 (via C-terminus). Interacts (via EF-hands 1 and 2) at microtubules with MAP1LC3B. Interacts with MYO1C. Interacts (via EF-hands 1 and 2) with NSMF (via the central NLS-containing motif region), the interaction occurs in a calcium dependent manner after synaptic NMDA receptor stimulation and prevents nuclear import of NSMF. Interacts with SPACA9. Phosphorylated. The phosphorylation regulates the activity. Retina and brain. Somatodendritic compartment of neurons. Calbrain was found exclusively in brain where it is abundant in the hippocampus, habenular area in the epithalamus and in the cerebellum.

The protein localises to the cytoplasm. It is found in the cytoskeleton. Its subcellular location is the perinuclear region. It localises to the cell membrane. The protein resides in the golgi apparatus. The protein localises to the postsynaptic density. It is found in the cell cortex. Its function is as follows. Modulates calcium-dependent activity of inositol 1,4,5-triphosphate receptors (ITPRs). Inhibits agonist-induced intracellular calcium signaling. Enhances inactivation and does not support calcium-dependent facilitation of voltage-dependent P/Q-type calcium channels. Causes calcium-dependent facilitation and inhibits inactivation of L-type calcium channels by binding to the same sites as calmodulin in the C-terminal domain of CACNA1C, but has an opposite effect on channel function. Suppresses the calcium-dependent inactivation of CACNA1D. Inhibits TRPC5 channels. Prevents NMDA receptor-induced cellular degeneration. Required for the normal transfer of light signals through the retina. This Homo sapiens (Human) protein is Calcium-binding protein 1 (CABP1).